The chain runs to 205 residues: uncharacterized protein (205 aa).

Positions 1–42 are disordered; sequence MSRKRDKPYTNRHTPARISKRRRPWAPSSSEHDEIIDKPITK. Residues 14-24 are compositionally biased toward basic residues; that stretch reads TPARISKRRRP. A compositionally biased stretch (basic and acidic residues) spans 30–40; it reads SEHDEIIDKPI. The 76-residue stretch at 47–122 folds into the RRM domain; sequence PALVVMGLPA…KKLEVVWATD (76 aa). Residues 170–191 form a disordered region; sequence PRSDNTKGISGDGGISSPATTS.

This is an uncharacterized protein from Arabidopsis thaliana (Mouse-ear cress).